The chain runs to 291 residues: Filament protein FIN1 (291 aa).

At serine 54 the chain carries Phosphoserine. Threonine 68 bears the Phosphothreonine mark. Serine 74 and serine 88 each carry phosphoserine. Positions 254 to 284 (VELKEIKDLLLQMLRRQREIESRLSNIELQL) form a coiled coil.

In terms of assembly, homooligomer; in vitro, FIN1 self-assembles into 10 nm diameter filaments. Interacts with the 14-3-3 proteins BMH1 and BMH2, and the protein phosphatase 1 complex catalytic subunit GLC7. Post-translationally, phosphorylated by CDC28. Phosphorylation is required for BMH1 and BMH2 interaction. Dephosphorylation by GLC7 depends on the presence of BMH1 and BMH2.

Its subcellular location is the nucleus. It localises to the cytoplasm. The protein resides in the cytoskeleton. The protein localises to the spindle pole. Forms cell-cycle specific filaments between the spindle pole bodies of dividing yeast cells. The polypeptide is Filament protein FIN1 (FIN1) (Saccharomyces cerevisiae (strain ATCC 204508 / S288c) (Baker's yeast)).